Consider the following 628-residue polypeptide: MWLPVYVPLLLVFGVSLSLPHGSLGTDSSSLRGVDADTEKRINVGKTHLQTLRNLETRCHDSLQALVVIDAGSSSTRTNVFLAKTRSCPNKGRSIDPDSIQLIREGKRFTGLRVVLEEWLDTYAGKDWESRPVDARLLFQYVPQMHEGAKKLMQLLEEDTVAILDSQLNEEQKVQVKALGIPVMLCSTAGVRDFHEWYRDALFVLLRHLINNPSPAHGYKFFTNPFWTRPITGAEEGLFAFITLNHLSRRLGEDPARCMIDEYGVKHCRNDLAGVVEVGGASAQIVFPLQEGTVLPSSVRAVNLQRERLLPERYPSADVVSVSFMQLGMASSAGLFLKELCSNDEFLQGGICSNPCLFKGFQQSCSAGEVEVRPDGSASVNEDVRKNRLKPLATYCSVHNPEISFKVTNEMQCRENSIDPTKPLAERMKIENCSIIEGTGNFDKCVSQVESILVAPKLPLPANIEAASSGFESVDQVFRFASSTAPMFITGREMLASIDTLKDHRLLRSDFSGDVEELAEAAREFCSSEVIIRTDGPVIQLPNARGEQKLNSLNFDLCKTMALTVSLLRHMAAGENQPSFIKWEKSIAGPDGKPLADLGWQVGVILHHVLFTEEWGRTAYEAGYSHNL.

Residues Met1 to Gly25 form the signal peptide. The active-site Proton acceptor is Glu236. N-linked (GlcNAc...) asparagine glycosylation is present at Asn432.

This sequence belongs to the GDA1/CD39 NTPase family. Homotetramer.

The protein localises to the secreted. It localises to the parasitophorous vacuole. It carries out the reaction a ribonucleoside 5'-triphosphate + H2O = a ribonucleoside 5'-diphosphate + phosphate + H(+). In terms of biological role, may perform an important processing step in the conversion of high energy nucleotides prior to uptake by the parasite. NTPAse-II has a specific activity 4.5-fold lower than NTPAse-I in hydrolysis of ATP. The primary difference between these isozymes lies in their ability to hydrolyze nucleoside triphosphate versus diphosphate substrates. While NTPAse-II hydrolyzes ATP to ADP and ADP to AMP at almost the same rate, NTPAse-I hydrolyzes ADP to AMP at a much slower rate (0.7% of the rate for ATP). This Toxoplasma gondii protein is Nucleoside-triphosphatase 2 (NTP1).